Here is a 283-residue protein sequence, read N- to C-terminus: Phosphatidylglycerol--prolipoprotein diacylglyceryl transferase (283 aa).

4 helical membrane passes run leucine 17–glycine 37, phenylalanine 56–tyrosine 76, tryptophan 92–phenylalanine 112, and glycine 117–serine 137. A 1,2-diacyl-sn-glycero-3-phospho-(1'-sn-glycerol) is bound at residue arginine 139. 3 helical membrane passes run proline 194–phenylalanine 214, glycine 222–alanine 242, and glycine 255–valine 275.

This sequence belongs to the Lgt family.

The protein resides in the cell inner membrane. The enzyme catalyses L-cysteinyl-[prolipoprotein] + a 1,2-diacyl-sn-glycero-3-phospho-(1'-sn-glycerol) = an S-1,2-diacyl-sn-glyceryl-L-cysteinyl-[prolipoprotein] + sn-glycerol 1-phosphate + H(+). It functions in the pathway protein modification; lipoprotein biosynthesis (diacylglyceryl transfer). In terms of biological role, catalyzes the transfer of the diacylglyceryl group from phosphatidylglycerol to the sulfhydryl group of the N-terminal cysteine of a prolipoprotein, the first step in the formation of mature lipoproteins. The polypeptide is Phosphatidylglycerol--prolipoprotein diacylglyceryl transferase (Neisseria meningitidis serogroup A / serotype 4A (strain DSM 15465 / Z2491)).